A 320-amino-acid polypeptide reads, in one-letter code: Cytochrome f (320 aa).

Positions 1-35 are cleaved as a signal peptide; that stretch reads MQTRNAFSWIKKEITRSISVLLMIYIITRAPISNA. Heme is bound by residues tyrosine 36, cysteine 56, cysteine 59, and histidine 60. Residues 286–305 form a helical membrane-spanning segment; that stretch reads VQGLLLFLASIILAQILLVL.

Belongs to the cytochrome f family. As to quaternary structure, the 4 large subunits of the cytochrome b6-f complex are cytochrome b6, subunit IV (17 kDa polypeptide, petD), cytochrome f and the Rieske protein, while the 4 small subunits are PetG, PetL, PetM and PetN. The complex functions as a dimer. It depends on heme as a cofactor.

The protein localises to the plastid. Its subcellular location is the chloroplast thylakoid membrane. Its function is as follows. Component of the cytochrome b6-f complex, which mediates electron transfer between photosystem II (PSII) and photosystem I (PSI), cyclic electron flow around PSI, and state transitions. This Pisum sativum (Garden pea) protein is Cytochrome f (petA).